The sequence spans 391 residues: U-box domain-containing protein 57 (391 aa).

The 178-residue stretch at 1–178 folds into the MIF4G domain; it reads MVKNSYVLFA…DLTERLLQVE (178 aa). The U-box domain maps to 322–391; sequence QPPPSFICPI…LRSAIEELGR (70 aa).

It carries out the reaction S-ubiquitinyl-[E2 ubiquitin-conjugating enzyme]-L-cysteine + [acceptor protein]-L-lysine = [E2 ubiquitin-conjugating enzyme]-L-cysteine + N(6)-ubiquitinyl-[acceptor protein]-L-lysine.. Its pathway is protein modification; protein ubiquitination. Functions as an E3 ubiquitin ligase. This is U-box domain-containing protein 57 (PUB57) from Arabidopsis thaliana (Mouse-ear cress).